Reading from the N-terminus, the 170-residue chain is MSVLQVLHYPDERLRKIAAPVKEVNGEIQRIVDDMFETMYAEEGIGLAATQVDVHLQIIVIDVSENRDQRLVLINPELLEKSGETGIEEGCLSIPEQRALVPRAEKVKIRALDRDGKPFELEADDLLAICIQHEMDHLVGKLFVDYLSPLKRQRIRQKLEKMAKLNARAN.

2 residues coordinate Fe cation: Cys-91 and His-133. Residue Glu-134 is part of the active site. His-137 contributes to the Fe cation binding site.

Belongs to the polypeptide deformylase family. The cofactor is Fe(2+).

It catalyses the reaction N-terminal N-formyl-L-methionyl-[peptide] + H2O = N-terminal L-methionyl-[peptide] + formate. Removes the formyl group from the N-terminal Met of newly synthesized proteins. Requires at least a dipeptide for an efficient rate of reaction. N-terminal L-methionine is a prerequisite for activity but the enzyme has broad specificity at other positions. The sequence is that of Peptide deformylase from Yersinia enterocolitica serotype O:8 / biotype 1B (strain NCTC 13174 / 8081).